An 89-amino-acid polypeptide reads, in one-letter code: Small ribosomal subunit protein uS15 (89 aa).

The protein belongs to the universal ribosomal protein uS15 family. In terms of assembly, part of the 30S ribosomal subunit. Forms a bridge to the 50S subunit in the 70S ribosome, contacting the 23S rRNA.

Its function is as follows. One of the primary rRNA binding proteins, it binds directly to 16S rRNA where it helps nucleate assembly of the platform of the 30S subunit by binding and bridging several RNA helices of the 16S rRNA. Forms an intersubunit bridge (bridge B4) with the 23S rRNA of the 50S subunit in the ribosome. In Arthrobacter sp. (strain FB24), this protein is Small ribosomal subunit protein uS15.